A 616-amino-acid polypeptide reads, in one-letter code: MPDQPLNRTTIPEKKLSNLPTCPGVYQFKNNQGTIIYVGKAKNIRSRVRSYFREGPHISGKTKVLVNHIADIDIILTSSEVEALILENNLIKDLKPRYNINLKDDKTYPYLVITNEAFPRILITRQVKRDGSTYFGPYTEARQLRSVLDLISTIFPVRKCKLKLTKENIESGRFSVCLNYHIHTCKGPCEGKQREEDYLRMIEEIKGLLKGKTGALIRTLSAEMHRYADELRFEEAAELKIQIEGLRKYTERQKVVSKDPVDRDVFGIAQHQDDACGVIFKIREGKLLGSQRMYFSNVDDEQHETLLRKCLEKYYLETPDLIPQEIFLPLPIDDDEVMALRELTGDINLRFIVPKIGEKAKLVAMCIDNARHHLEEYLIEKQKRGELSRIVPALQALQETLHLSRQPERIECFDNSHFQGTDYTSSMVCFVGGKPRKSDYRKFKLNSFEGSDDYAAMQEAVTRRYSGSLQDELPLPDLIVIDGGKGQVNTAWKVLQELGLEIPVIGLAKRLEEIFLPNTPDPYNLAKTSPALKLLQQIRDEAHRFAITYHRKLRTKRTIQTGLTDIAGIGEKSAMKLLEHFGSIEQIAKAEKEEILAVTGPKTAEAILSYFRKKQP.

The region spanning 21–100 is the GIY-YIG domain; the sequence is TCPGVYQFKN…IKDLKPRYNI (80 aa). The UVR domain occupies 214 to 249; the sequence is GALIRTLSAEMHRYADELRFEEAAELKIQIEGLRKY.

This sequence belongs to the UvrC family. As to quaternary structure, interacts with UvrB in an incision complex.

Its subcellular location is the cytoplasm. In terms of biological role, the UvrABC repair system catalyzes the recognition and processing of DNA lesions. UvrC both incises the 5' and 3' sides of the lesion. The N-terminal half is responsible for the 3' incision and the C-terminal half is responsible for the 5' incision. The chain is UvrABC system protein C from Prosthecochloris aestuarii (strain DSM 271 / SK 413).